The chain runs to 372 residues: Heat-inducible transcription repressor HrcA (372 aa).

The tract at residues 300–334 (YGRSGAAGEPAGNDPVGEPETESETESQTNDTEPI) is disordered.

This sequence belongs to the HrcA family.

Its function is as follows. Negative regulator of class I heat shock genes (grpE-dnaK-dnaJ and groELS operons). Prevents heat-shock induction of these operons. In Bifidobacterium longum (strain NCC 2705), this protein is Heat-inducible transcription repressor HrcA.